We begin with the raw amino-acid sequence, 188 residues long: Peptidyl-tRNA hydrolase (188 aa).

Tyr14 contacts tRNA. The Proton acceptor role is filled by His19. Positions 64, 66, and 112 each coordinate tRNA.

This sequence belongs to the PTH family. Monomer.

It is found in the cytoplasm. It carries out the reaction an N-acyl-L-alpha-aminoacyl-tRNA + H2O = an N-acyl-L-amino acid + a tRNA + H(+). In terms of biological role, hydrolyzes ribosome-free peptidyl-tRNAs (with 1 or more amino acids incorporated), which drop off the ribosome during protein synthesis, or as a result of ribosome stalling. Catalyzes the release of premature peptidyl moieties from peptidyl-tRNA molecules trapped in stalled 50S ribosomal subunits, and thus maintains levels of free tRNAs and 50S ribosomes. Releases Ala-tailed nascent peptides from stalled 50S ribosomal subunits. Non-templated Ala tailing occurs as part of the ribosome quality control (RQC) pathway. In the absence of Ala tails significantly less peptide release occurs. The Ala tail facilitates the interaction of Pth with the nascent peptide-tRNA ester bond as well as promoting nascent chain degradation; 3 Ala residues suffice to stimulate peptide release from stalled 50S ribosomal subunits. Complements a temperature-sensitive pth mutation in E.coli. The polypeptide is Peptidyl-tRNA hydrolase (Bacillus subtilis (strain 168)).